We begin with the raw amino-acid sequence, 550 residues long: Genetic interactor of prohibitins 3, mitochondrial (550 aa).

The N-terminal 43 residues, 1–43 (MKSRLQAFKQFTRFVSCKSCGVELQSKNPSVTGYYKPPRAVRK), are a transit peptide targeting the mitochondrion. The region spanning 107-298 (IHSFNDIKGA…VNDLPGYTMD (192 aa)) is the CP-type G domain.

It belongs to the TRAFAC class YlqF/YawG GTPase family. GEP3 subfamily.

The protein resides in the mitochondrion. Functionally, may be involved in the mitochondrial lipid metabolism. This chain is Genetic interactor of prohibitins 3, mitochondrial (GEP3), found in Kluyveromyces lactis (strain ATCC 8585 / CBS 2359 / DSM 70799 / NBRC 1267 / NRRL Y-1140 / WM37) (Yeast).